The following is a 278-amino-acid chain: Glycerophosphodiester phosphodiesterase GpdQ (278 aa).

7 residues coordinate Fe cation: D8, H10, D50, N80, H156, H195, and H197.

This sequence belongs to the cyclic nucleotide phosphodiesterase class-III family. Requires Fe(2+) as cofactor.

The catalysed reaction is a sn-glycero-3-phosphodiester + H2O = an alcohol + sn-glycerol 3-phosphate + H(+). It catalyses the reaction sn-glycero-3-phosphoethanolamine + H2O = ethanolamine + sn-glycerol 3-phosphate + H(+). Its function is as follows. Catalyzes the hydrolysis of the 3'-5' phosphodiester bond of glycerophosphodiesters such as glycerophosphorylethanolamine (GPE), a typical phospholipid metabolite. In Enterobacter lignolyticus (strain SCF1), this protein is Glycerophosphodiester phosphodiesterase GpdQ.